We begin with the raw amino-acid sequence, 79 residues long: UPF0291 protein BH2353 (79 aa).

The tract at residues 57–79 (GAGNDVTPDKLKQSKNKYRNDIH) is disordered. Positions 63-79 (TPDKLKQSKNKYRNDIH) are enriched in basic and acidic residues.

It belongs to the UPF0291 family.

The protein localises to the cytoplasm. In Halalkalibacterium halodurans (strain ATCC BAA-125 / DSM 18197 / FERM 7344 / JCM 9153 / C-125) (Bacillus halodurans), this protein is UPF0291 protein BH2353.